Reading from the N-terminus, the 232-residue chain is UPF0758 protein Clos_1766 (232 aa).

Positions 110–232 constitute an MPN domain; it reads KIKGPDDVSN…YFSMKEHKLI (123 aa). H181, H183, and D194 together coordinate Zn(2+). A JAMM motif motif is present at residues 181–194; that stretch reads HNHPSGDPNPSGED.

It belongs to the UPF0758 family.

The sequence is that of UPF0758 protein Clos_1766 from Alkaliphilus oremlandii (strain OhILAs) (Clostridium oremlandii (strain OhILAs)).